The following is a 156-amino-acid chain: Small ribosomal subunit protein uS7 (156 aa).

The protein belongs to the universal ribosomal protein uS7 family. As to quaternary structure, part of the 30S ribosomal subunit. Contacts proteins S9 and S11.

Functionally, one of the primary rRNA binding proteins, it binds directly to 16S rRNA where it nucleates assembly of the head domain of the 30S subunit. Is located at the subunit interface close to the decoding center, probably blocks exit of the E-site tRNA. The polypeptide is Small ribosomal subunit protein uS7 (Clostridium acetobutylicum (strain ATCC 824 / DSM 792 / JCM 1419 / IAM 19013 / LMG 5710 / NBRC 13948 / NRRL B-527 / VKM B-1787 / 2291 / W)).